We begin with the raw amino-acid sequence, 430 residues long: MFVDQVKISLKAGDGGNGITAYRREKYVPFGGPAGGDGGKGASVVFEVDEGLRTLLDFRYQRHFKASKGENGQSSNMHGKNAEDLVLKVPPGTIIKNVETDEVLADLVEDGQRAVVAKGGRGGRGNSRFATPRNPAPDFSEKGEPGEELDVSLELKLLADVGLVGFPSVGKSTLLSIVSKAKPKIGAYHFTTIKPNLGVVSTPDQRSFVMADLPGLIEGASDGVGLGHQFLRHVERTKVIVHMIDMSGSEGREPIEDYKVINQELAAYEQRLEDRPQIVVANKMDLPESQDNLNLFKEEIGEDVPVIPVSTITRDNIDQLLYAIADKLEEYKDVDITVEEEESVGINRVLYKHTPSQDKFTISRDDDGAYVVSGNAIERMFKMTDFNSDPAVRRFARQMRSMGIDDALRERGCKNGDIVRILGGEFEFVE.

Residues 1–158 form the Obg domain; that stretch reads MFVDQVKISL…LDVSLELKLL (158 aa). The segment at 118–145 is disordered; sequence KGGRGGRGNSRFATPRNPAPDFSEKGEP. An OBG-type G domain is found at 159-329; that stretch reads ADVGLVGFPS…LLYAIADKLE (171 aa). Residues 165–172, 190–194, 212–215, 282–285, and 310–312 contribute to the GTP site; these read GFPSVGKS, FTTIK, DLPG, NKMD, and STI. 2 residues coordinate Mg(2+): Ser172 and Thr192. One can recognise an OCT domain in the interval 352–430; that stretch reads KHTPSQDKFT…ILGGEFEFVE (79 aa).

The protein belongs to the TRAFAC class OBG-HflX-like GTPase superfamily. OBG GTPase family. Monomer. It depends on Mg(2+) as a cofactor.

It is found in the cytoplasm. Functionally, an essential GTPase which binds GTP, GDP and possibly (p)ppGpp with moderate affinity, with high nucleotide exchange rates and a fairly low GTP hydrolysis rate. Plays a role in control of the cell cycle, stress response, ribosome biogenesis and in those bacteria that undergo differentiation, in morphogenesis control. The sequence is that of GTPase Obg from Staphylococcus aureus (strain COL).